We begin with the raw amino-acid sequence, 457 residues long: Argininosuccinate lyase (457 aa).

The protein belongs to the lyase 1 family. Argininosuccinate lyase subfamily.

Its subcellular location is the cytoplasm. It carries out the reaction 2-(N(omega)-L-arginino)succinate = fumarate + L-arginine. Its pathway is amino-acid biosynthesis; L-arginine biosynthesis; L-arginine from L-ornithine and carbamoyl phosphate: step 3/3. The sequence is that of Argininosuccinate lyase from Haemophilus influenzae (strain PittEE).